Here is a 41-residue protein sequence, read N- to C-terminus: U-AITX-Bg1a (41 aa).

Disulfide bonds link Cys-2–Cys-35, Cys-4–Cys-28, and Cys-18–Cys-36.

This sequence belongs to the sea anemone type 3 (BDS) potassium channel toxin family.

It localises to the secreted. The protein localises to the nematocyst. Functionally, potently and selectively inhibits voltage-gated potassium channels Kv11/KCNH/ERG. Acts as a gating-modifier toxin that shifts the voltage-dependence of ERG activation in the positive direction and suppresses its current amplitudes elicited by strong depolarizing pulses that maximally activate the channels. The sequence is that of U-AITX-Bg1a from Bunodosoma granuliferum (Red warty sea anemone).